The chain runs to 257 residues: 1-acyl-sn-glycerol-3-phosphate acyltransferase (257 aa).

The helical transmembrane segment at 10–30 (VLFYLLLSASAFVWGTLSFFI) threads the bilayer. The short motif at 82 to 87 (HQSTWE) is the HXXXXD motif element. A helical membrane pass occupies residues 105–125 (ELLYVPFFGWALALLKPIAID).

This sequence belongs to the 1-acyl-sn-glycerol-3-phosphate acyltransferase family.

The protein resides in the cell inner membrane. The enzyme catalyses a 1-acyl-sn-glycero-3-phosphate + an acyl-CoA = a 1,2-diacyl-sn-glycero-3-phosphate + CoA. The protein operates within phospholipid metabolism; CDP-diacylglycerol biosynthesis; CDP-diacylglycerol from sn-glycerol 3-phosphate: step 2/3. Its function is as follows. Converts lysophosphatidic acid (LPA) into phosphatidic acid by incorporating acyl moiety at the 2 position. This chain is 1-acyl-sn-glycerol-3-phosphate acyltransferase, found in Pseudomonas aeruginosa (strain ATCC 15692 / DSM 22644 / CIP 104116 / JCM 14847 / LMG 12228 / 1C / PRS 101 / PAO1).